The following is a 249-amino-acid chain: Ribosomal RNA small subunit methyltransferase G (249 aa).

Residues G88, F93, D111 to T113, A139 to E140, and R158 each bind S-adenosyl-L-methionine.

It belongs to the methyltransferase superfamily. RNA methyltransferase RsmG family.

It localises to the cytoplasm. Its function is as follows. Specifically methylates the N7 position of a guanine in 16S rRNA. In Thermus thermophilus (strain ATCC BAA-163 / DSM 7039 / HB27), this protein is Ribosomal RNA small subunit methyltransferase G.